The primary structure comprises 273 residues: Replication factor A protein 2 (273 aa).

A compositionally biased stretch (polar residues) spans 1 to 13; the sequence is MATYQPYNEYSSV. Residues 1–38 form a disordered region; the sequence is MATYQPYNEYSSVTGGGFENSESRPGSGESETNTRVNT. Serine 27 carries the phosphoserine modification. The span at 29-38 shows a compositional bias: polar residues; sequence ESETNTRVNT. Positions 69 to 157 form a DNA-binding region, OB; it reads VCFVGVVRNI…NIQYAVIKPI (89 aa). Serine 122 carries the phosphoserine modification.

This sequence belongs to the replication factor A protein 2 family. As to quaternary structure, heterotrimer of 69, 36, and 13 kDa chains. The DNA-binding activity may reside exclusively on the 69 kDa subunit. Interacts with MCM10. Phosphorylated in a cell cycle-dependent manner with phosphorylation increasing at the entry in S phase and dephosphorylation occurring at mitosis. In terms of processing, the N-terminus is blocked.

Its subcellular location is the nucleus. Binds to single-stranded sequences participating in DNA replication in addition to those mediating transcriptional repression (URS1) and activation (CAR1). Stimulates the activity of a cognate strand exchange protein (SEP1). It cooperates with T-AG and DNA topoisomerase I to unwind template DNA containing the simian virus 40 origin of DNA replication. This Saccharomyces cerevisiae (strain ATCC 204508 / S288c) (Baker's yeast) protein is Replication factor A protein 2 (RFA2).